The chain runs to 469 residues: 3-isopropylmalate dehydratase large subunit (469 aa).

The [4Fe-4S] cluster site is built by Cys347, Cys408, and Cys411.

This sequence belongs to the aconitase/IPM isomerase family. LeuC type 1 subfamily. As to quaternary structure, heterodimer of LeuC and LeuD. [4Fe-4S] cluster serves as cofactor.

The enzyme catalyses (2R,3S)-3-isopropylmalate = (2S)-2-isopropylmalate. Its pathway is amino-acid biosynthesis; L-leucine biosynthesis; L-leucine from 3-methyl-2-oxobutanoate: step 2/4. In terms of biological role, catalyzes the isomerization between 2-isopropylmalate and 3-isopropylmalate, via the formation of 2-isopropylmaleate. The protein is 3-isopropylmalate dehydratase large subunit of Actinobacillus pleuropneumoniae serotype 5b (strain L20).